Consider the following 424-residue polypeptide: Serine hydroxymethyltransferase (424 aa).

(6S)-5,6,7,8-tetrahydrofolate-binding positions include Leu-113 and 117 to 119 (GHL). At Lys-222 the chain carries N6-(pyridoxal phosphate)lysine. 361 to 363 (SPF) lines the (6S)-5,6,7,8-tetrahydrofolate pocket.

Belongs to the SHMT family. Homodimer. Pyridoxal 5'-phosphate serves as cofactor.

Its subcellular location is the cytoplasm. The catalysed reaction is (6R)-5,10-methylene-5,6,7,8-tetrahydrofolate + glycine + H2O = (6S)-5,6,7,8-tetrahydrofolate + L-serine. Its pathway is one-carbon metabolism; tetrahydrofolate interconversion. The protein operates within amino-acid biosynthesis; glycine biosynthesis; glycine from L-serine: step 1/1. Its function is as follows. Catalyzes the reversible interconversion of serine and glycine with tetrahydrofolate (THF) serving as the one-carbon carrier. This reaction serves as the major source of one-carbon groups required for the biosynthesis of purines, thymidylate, methionine, and other important biomolecules. Also exhibits THF-independent aldolase activity toward beta-hydroxyamino acids, producing glycine and aldehydes, via a retro-aldol mechanism. In Flavobacterium johnsoniae (strain ATCC 17061 / DSM 2064 / JCM 8514 / BCRC 14874 / CCUG 350202 / NBRC 14942 / NCIMB 11054 / UW101) (Cytophaga johnsonae), this protein is Serine hydroxymethyltransferase.